Here is a 285-residue protein sequence, read N- to C-terminus: Pantothenate synthetase (285 aa).

30-37 contributes to the ATP binding site; the sequence is MGNLHDGH. Catalysis depends on H37, which acts as the Proton donor. Q61 contributes to the (R)-pantoate binding site. Beta-alanine is bound at residue Q61. 149–152 is a binding site for ATP; sequence GEKD. Residue Q155 coordinates (R)-pantoate. Residues I178 and 186 to 189 contribute to the ATP site; that span reads LSSR.

The protein belongs to the pantothenate synthetase family. Homodimer.

The protein localises to the cytoplasm. The catalysed reaction is (R)-pantoate + beta-alanine + ATP = (R)-pantothenate + AMP + diphosphate + H(+). It participates in cofactor biosynthesis; (R)-pantothenate biosynthesis; (R)-pantothenate from (R)-pantoate and beta-alanine: step 1/1. Functionally, catalyzes the condensation of pantoate with beta-alanine in an ATP-dependent reaction via a pantoyl-adenylate intermediate. The chain is Pantothenate synthetase from Buchnera aphidicola subsp. Acyrthosiphon pisum (strain Tuc7).